The following is a 128-amino-acid chain: U24-ctenitoxin-Pn1a (128 aa).

Thyroglobulin type-1 domains follow at residues 4–67 (KSDC…ECGC) and 72–127 (KERK…SLKC). 4 disulfides stabilise this stretch: Cys-7–Cys-27, Cys-38–Cys-45, Cys-47–Cys-67, and Cys-107–Cys-127.

Expressed by the venom gland.

It localises to the secreted. Functionally, cysteine proteinase inhibitor. This Phoneutria nigriventer (Brazilian armed spider) protein is U24-ctenitoxin-Pn1a.